The sequence spans 372 residues: Glutamate 5-kinase (372 aa).

K14 is an ATP binding site. Substrate contacts are provided by S54, D141, and N153. Residue 173-174 coordinates ATP; the sequence is TD. The PUA domain occupies 280–358; the sequence is RGHVVIDAGA…GEIEIVLGYM (79 aa).

This sequence belongs to the glutamate 5-kinase family.

The protein localises to the cytoplasm. It carries out the reaction L-glutamate + ATP = L-glutamyl 5-phosphate + ADP. It functions in the pathway amino-acid biosynthesis; L-proline biosynthesis; L-glutamate 5-semialdehyde from L-glutamate: step 1/2. In terms of biological role, catalyzes the transfer of a phosphate group to glutamate to form L-glutamate 5-phosphate. The protein is Glutamate 5-kinase of Burkholderia orbicola (strain MC0-3).